The sequence spans 200 residues: 3-isopropylmalate dehydratase small subunit (200 aa).

Belongs to the LeuD family. LeuD type 1 subfamily. In terms of assembly, heterodimer of LeuC and LeuD.

It catalyses the reaction (2R,3S)-3-isopropylmalate = (2S)-2-isopropylmalate. The protein operates within amino-acid biosynthesis; L-leucine biosynthesis; L-leucine from 3-methyl-2-oxobutanoate: step 2/4. Catalyzes the isomerization between 2-isopropylmalate and 3-isopropylmalate, via the formation of 2-isopropylmaleate. The polypeptide is 3-isopropylmalate dehydratase small subunit (Histophilus somni (strain 129Pt) (Haemophilus somnus)).